A 320-amino-acid chain; its full sequence is Protein LATERAL ROOT PRIMORDIUM 1 (320 aa).

The disordered stretch occupies residues 90–110 (QTTVGTSSNNSGSGSGASGTA). The Zn(2+) site is built by Cys-112, Cys-115, Cys-123, Cys-128, Cys-132, and Cys-139. The zn(2)-C6 fungal-type; degenerate DNA-binding region spans 112 to 139 (CQDCGNQAKKECKQRRCRTCCKSRGFDC). The interval 150-223 (AARRRERQVM…QDGGGSREAW (74 aa)) is disordered. Positions 168-177 (GSSLSTSSGT) are enriched in low complexity. The span at 193-214 (ATSHTSTSNTPPQSFETSSSRQ) shows a compositional bias: polar residues. The Required for homo- and heterodimerization motif lies at 256 to 259 (IGGH).

This sequence belongs to the SHI protein family. As to quaternary structure, homodimer. As to expression, restricted to lateral root primordia.

Its subcellular location is the nucleus. Functionally, transcription activator that binds DNA on 5'-ACTCTAC-3' and promotes auxin homeostasis-regulating gene expression (e.g. YUC genes), as well as genes affecting stamen development, cell expansion and timing of flowering. Synergistically with other SHI-related proteins, regulates gynoecium, stamen and leaf development in a dose-dependent manner, controlling apical-basal patterning. Promotes style and stigma formation, and influence vascular development during gynoecium development. May also have a role in the formation and/or maintenance of the shoot apical meristem (SAM). Modulates root growth. This is Protein LATERAL ROOT PRIMORDIUM 1 (LRP1) from Arabidopsis thaliana (Mouse-ear cress).